The primary structure comprises 756 residues: NUT family member 2F (756 aa).

4 disordered regions span residues Gly173 to Ser200, Ile293 to Pro438, Arg511 to Met639, and Arg653 to Gln756. The span at Ser304–Pro321 shows a compositional bias: pro residues. A compositionally biased stretch (basic and acidic residues) spans Glu417 to Gln427. The span at Gln543 to Gln560 shows a compositional bias: polar residues. The segment covering Leu654 to Leu665 has biased composition (low complexity). A compositionally biased stretch (basic residues) spans Ser746–Gln756.

It belongs to the NUT family.

In Homo sapiens (Human), this protein is NUT family member 2F (NUTM2F).